The primary structure comprises 433 residues: Protein translocase subunit SecY (433 aa).

Transmembrane regions (helical) follow at residues 17–37, 71–91, 117–137, 141–161, 184–204, 212–232, 268–288, 309–329, 366–386, and 388–408; these read IIFTIFVLIICRFGSFIPIAG, IFALAIMPYITASIIIQLMSV, LTVLLASLQAYGVAVSLESIV, GPVVIIPGLFFKITTVITLVV, LIIFIGIISGVPSAIISMFEL, PLVAIAVCAGVVILISIIIFF, GVIPPIFASSILLFPATLANF, IYILLYVALIMFFSFFYTAIV, LTVVGGIYLSVICIIPELLMN, and YVISLSLGGTSFLIVVNVVLD.

Belongs to the SecY/SEC61-alpha family. As to quaternary structure, component of the Sec protein translocase complex. Heterotrimer consisting of SecY, SecE and SecG subunits. The heterotrimers can form oligomers, although 1 heterotrimer is thought to be able to translocate proteins. Interacts with the ribosome. Interacts with SecDF, and other proteins may be involved. Interacts with SecA.

The protein resides in the cell inner membrane. The central subunit of the protein translocation channel SecYEG. Consists of two halves formed by TMs 1-5 and 6-10. These two domains form a lateral gate at the front which open onto the bilayer between TMs 2 and 7, and are clamped together by SecE at the back. The channel is closed by both a pore ring composed of hydrophobic SecY resides and a short helix (helix 2A) on the extracellular side of the membrane which forms a plug. The plug probably moves laterally to allow the channel to open. The ring and the pore may move independently. The protein is Protein translocase subunit SecY of Rickettsia bellii (strain RML369-C).